Consider the following 86-residue polypeptide: Small ribosomal subunit protein bS20 (86 aa).

Belongs to the bacterial ribosomal protein bS20 family.

Its function is as follows. Binds directly to 16S ribosomal RNA. In Bifidobacterium adolescentis (strain ATCC 15703 / DSM 20083 / NCTC 11814 / E194a), this protein is Small ribosomal subunit protein bS20.